The sequence spans 349 residues: Soluble TNF receptor II (349 aa).

The first 19 residues, methionine 1–glycine 19, serve as a signal peptide directing secretion. 2 TNFR-Cys repeats span residues lysine 31–cysteine 65 and proline 67–cysteine 108. Disulfide bonds link cysteine 32/cysteine 43, cysteine 44/cysteine 57, cysteine 47/cysteine 65, cysteine 68/cysteine 83, cysteine 86/cysteine 100, and cysteine 90/cysteine 108. Asparagine 101, asparagine 189, and asparagine 248 each carry an N-linked (GlcNAc...) asparagine; by host glycan.

The protein belongs to the orthopoxvirus OPG002 family.

Inhibits host immune defense by binding to host TNF and various chemokines in the extracellular space. Binds host CC chemokines (beta chemokines) and CXC chemokines (alpha chemokines). In Camelus, this protein is Soluble TNF receptor II (OPG002).